The sequence spans 311 residues: Olfactory receptor 10G4 (311 aa).

Residues 1 to 23 (MSNASLVTAFILTGLPHAPGLDA) are Extracellular-facing. N3 carries an N-linked (GlcNAc...) asparagine glycan. Residues 24 to 44 (LLFGIFLVVYVLTVLGNLLIL) form a helical membrane-spanning segment. Over 45-52 (LVIRVDSH) the chain is Cytoplasmic. Residues 53 to 73 (LHTPMYYFLTNLSFIDMWFST) traverse the membrane as a helical segment. Topologically, residues 74–98 (VTVPKMLMTLVSPSGRAISFHSCVA) are extracellular. A disulfide bridge links C96 with C188. Residues 99–119 (QLYFFHFLGSTECFLYTVMSY) form a helical membrane-spanning segment. Residues 120 to 138 (DRYLAISYPLRYTSMMSGS) lie on the Cytoplasmic side of the membrane. The helical transmembrane segment at 139-159 (RCALLATGTWLSGSLHSAVQT) threads the bilayer. The Extracellular segment spans residues 160–196 (ILTFHLPYCGPNQIQHYFCDAPPILKLACADTSANVM). The helical transmembrane segment at 197 to 216 (VIFVDIGIVASGCFVLIVLS) threads the bilayer. Over 217–236 (YVSIVCSILRIRTSDGRRRA) the chain is Cytoplasmic. The chain crosses the membrane as a helical span at residues 237 to 257 (FQTCASHCIVVLCFFVPCVVI). The Extracellular segment spans residues 258–268 (YLRPGSMDAMD). Residues 269 to 289 (GVVAIFYTVLTPLLNPVVYTL) form a helical membrane-spanning segment. At 290-311 (RNKEVKKAVLKLRDKVAHPQRK) the chain is on the cytoplasmic side.

The protein belongs to the G-protein coupled receptor 1 family.

The protein localises to the cell membrane. In terms of biological role, odorant receptor. This is Olfactory receptor 10G4 (OR10G4) from Homo sapiens (Human).